Reading from the N-terminus, the 738-residue chain is DNA topoisomerase 4 subunit A (738 aa).

A Topo IIA-type catalytic domain is found at 32-496; sequence LPDVRDGLKP…SFEEVTLTNQ (465 aa). The active-site O-(5'-phospho-DNA)-tyrosine intermediate is Y120.

This sequence belongs to the type II topoisomerase GyrA/ParC subunit family. ParC type 1 subfamily. As to quaternary structure, heterotetramer composed of ParC and ParE.

Its subcellular location is the cell membrane. The enzyme catalyses ATP-dependent breakage, passage and rejoining of double-stranded DNA.. Topoisomerase IV is essential for chromosome segregation. It relaxes supercoiled DNA. Performs the decatenation events required during the replication of a circular DNA molecule. This chain is DNA topoisomerase 4 subunit A, found in Rickettsia conorii (strain ATCC VR-613 / Malish 7).